Here is a 520-residue protein sequence, read N- to C-terminus: Ribonuclease Y (520 aa).

The helical transmembrane segment at 3 to 23 threads the bilayer; that stretch reads IEIAIVLILAAAGLGYFVGNM. The 64-residue stretch at 210 to 273 folds into the KH domain; that stretch reads SVSVVALPSD…EVAKIALEKL (64 aa). The HD domain maps to 336–429; it reads VYQHSLEVAF…VQAADALSGA (94 aa).

It belongs to the RNase Y family.

The protein localises to the cell membrane. Functionally, endoribonuclease that initiates mRNA decay. The protein is Ribonuclease Y of Geobacter metallireducens (strain ATCC 53774 / DSM 7210 / GS-15).